Consider the following 297-residue polypeptide: Urease accessory protein UreD (297 aa).

The segment covering 1-18 (MNSSAASPPAVSPHAAPS) has biased composition (low complexity). Disordered stretches follow at residues 1–20 (MNSS…PSRT) and 178–201 (VDQA…PRRR).

Belongs to the UreD family. In terms of assembly, ureD, UreF and UreG form a complex that acts as a GTP-hydrolysis-dependent molecular chaperone, activating the urease apoprotein by helping to assemble the nickel containing metallocenter of UreC. The UreE protein probably delivers the nickel.

The protein localises to the cytoplasm. Required for maturation of urease via the functional incorporation of the urease nickel metallocenter. This Parafrankia sp. (strain EAN1pec) protein is Urease accessory protein UreD.